Reading from the N-terminus, the 947-residue chain is Protocadherin alpha-4 (947 aa).

Positions 1 to 29 are cleaved as a signal peptide; the sequence is MEFSWGSGQESQRLLLSFLFLAIWEPGNS. 6 consecutive Cadherin domains span residues 30–133, 134–242, 243–350, 351–455, 456–565, and 573–681; these read QLHY…PPTF, PTTQ…SPVF, DRSL…APEL, EFKS…APAF, AQPE…APTL, and SGGI…APSR. The Extracellular segment spans residues 30–697; it reads QLHYSIPEEA…NAEASLVDVN (668 aa). A disulfide bridge links cysteine 96 with cysteine 102. N-linked (GlcNAc...) asparagine glycosylation is found at asparagine 257 and asparagine 265. The N-linked (GlcNAc...) asparagine glycan is linked to asparagine 548. The chain crosses the membrane as a helical span at residues 698–718; sequence VYLIIAICAVSSLLVLTLLLY. The Cytoplasmic segment spans residues 719–947; that stretch reads SALRCSTVPS…GNSTTDNSDQ (229 aa). 6 PXXP repeats span residues 734 to 737, 774 to 777, 796 to 799, 829 to 832, 870 to 873, and 888 to 891; these read PPKP, PSLS, PRQP, PGGP, PGNP, and PGSP. A 6 X 4 AA repeats of P-X-X-P region spans residues 734–891; the sequence is PPKPVMVCSS…PDKFIIPGSP (158 aa). The interval 738–947 is required for interaction with FYN; the sequence is VMVCSSAVGS…GNSTTDNSDQ (210 aa). Disordered regions lie at residues 761–805 and 824–853; these read GEYP…DWRY and ILRA…EVSP. Positions 897-947 are disordered; the sequence is RQESANNQIDKSDFITFGKKEETKKKKKKKKGNKTQEKKEKGNSTTDNSDQ. Residues 906 to 920 are compositionally biased toward basic and acidic residues; it reads DKSDFITFGKKEETK.

As to quaternary structure, forms homodimers in trans (molecules expressed by two different cells). Forms promiscuous heterodimers in cis (at the plasma membrane of the same cell) with other protocadherins. Interacts with FYN. As to expression, detected in brain.

The protein localises to the cell membrane. Calcium-dependent cell-adhesion protein involved in cells self-recognition and non-self discrimination. Thereby, it is involved in the establishment and maintenance of specific neuronal connections in the brain. The protein is Protocadherin alpha-4 of Rattus norvegicus (Rat).